The sequence spans 552 residues: Alpha-galactosidase (552 aa).

Residues Trp65, Tyr191, 220-221, 325-327, Cys368, and Arg383 contribute to the substrate site; these read DD and KID. Asp327 functions as the Nucleophile in the catalytic mechanism. Asp387 serves as the catalytic Proton donor/acceptor.

It belongs to the glycosyl hydrolase 36 family. Homodimer.

It carries out the reaction Hydrolysis of terminal, non-reducing alpha-D-galactose residues in alpha-D-galactosides, including galactose oligosaccharides, galactomannans and galactolipids.. Its activity is regulated as follows. Inhibited by hydrolysis product alpha-galactopyranose and to a lesser extent by beta-galactopyranose, its mutarotational product. Inhibited by synthetic cyclopropyl carbasugars. Functionally, hydrolyzes the short-chain alpha-galactosaccharides raffinose, melibiose and stachyose. This chain is Alpha-galactosidase, found in Thermotoga maritima (strain ATCC 43589 / DSM 3109 / JCM 10099 / NBRC 100826 / MSB8).